Reading from the N-terminus, the 1915-residue chain is Cysteine repeat modular protein 2 (1915 aa).

Positions 1–23 (MKFKKELINILALIFVLKKNIFA) are cleaved as a signal peptide. FU repeat units follow at residues 53 to 98 (LGLC…QTYV), 104 to 151 (SCIC…GYTQ), 161 to 208 (QLLC…LQYK), 210 to 263 (NGIC…GYVV), and 267 to 315 (TQRC…GNYQ). Asparagine 138 carries an N-linked (GlcNAc...) asparagine glycan. Asparagine 274, asparagine 279, and asparagine 316 each carry an N-linked (GlcNAc...) asparagine glycan. 5 FU repeats span residues 317-362 (SSLC…GFYT), 373-422 (QPIC…QTYY), 427-492 (TRSC…GFYQ), 496-546 (NNSC…SQNN), and 554-602 (TQAC…GTYM). A glycan (N-linked (GlcNAc...) asparagine) is linked at asparagine 409. Residues asparagine 496, asparagine 572, asparagine 603, and asparagine 621 are each glycosylated (N-linked (GlcNAc...) asparagine). 3 FU repeats span residues 606-639 (TNQC…LQQN), 640-686 (YNVC…GFYV), and 690-739 (QQAC…NECL). Asparagine 742 carries N-linked (GlcNAc...) asparagine glycosylation. FU repeat units lie at residues 760–814 (DGQC…GFYY) and 818–865 (NKQC…GYYQ). Asparagine 909, asparagine 930, asparagine 1051, asparagine 1085, and asparagine 1193 each carry an N-linked (GlcNAc...) asparagine glycan. One can recognise an EGF-like domain in the interval 1184–1224 (VQIPCDSNINCSGNGKCLWSQDNYNEILCICNINYAGRYCE). Disulfide bonds link cysteine 1188–cysteine 1200, cysteine 1194–cysteine 1212, and cysteine 1214–cysteine 1223. N-linked (GlcNAc...) asparagine glycans are attached at residues asparagine 1250, asparagine 1297, asparagine 1519, asparagine 1546, asparagine 1554, asparagine 1580, and asparagine 1596. The next 5 helical transmembrane spans lie at 1599–1619 (LLYA…ISII), 1662–1682 (YAQL…VYSL), 1704–1724 (STSV…VNLF), 1763–1783 (GLVF…ILSF), and 1796–1816 (FASF…FCFI). Asparagine 1867 carries N-linked (GlcNAc...) asparagine glycosylation.

The protein resides in the membrane. Functionally, required for mucocyst secretion. This is Cysteine repeat modular protein 2 from Tetrahymena thermophila (strain SB210).